We begin with the raw amino-acid sequence, 341 residues long: Geranylfarnesyl diphosphate synthase (341 aa).

Residues K47, R50, and Q95 each coordinate isopentenyl diphosphate. The Mg(2+) site is built by D102 and D106. An an all-trans-polyprenyl diphosphate-binding site is contributed by R111. R112 contacts isopentenyl diphosphate. Residues K193, T194, and Q231 each coordinate an all-trans-polyprenyl diphosphate.

Belongs to the FPP/GGPP synthase family. Homodimer. The cofactor is Mg(2+).

It is found in the cytoplasm. It carries out the reaction isopentenyl diphosphate + (2E,6E,10E)-geranylgeranyl diphosphate = (2E,6E,10E,14E)-geranylfarnesyl diphosphate + diphosphate. In terms of biological role, probably involved in biosynthesis of the precursor for C25 (sesterterpanyl chain) moiety of C20-C25 diether (2-O-sesterterpanyl-3-O-phytanyl-sn-glycer) membrane lipid. Catalyzes the condensation of isopentenyl pyrophosphate with the allylic pyrophosphates to yield geranylfarnesyl diphosphate (GFPP). Geranylgeranyl diphosphate (GGPP) is the preferred substrate, but dimethylallyl diphosphate (DMAPP) and farnesyl diphosphate (FPP) can also be used as allylic substrate. This is Geranylfarnesyl diphosphate synthase (idsA3) from Natronomonas pharaonis (strain ATCC 35678 / DSM 2160 / CIP 103997 / JCM 8858 / NBRC 14720 / NCIMB 2260 / Gabara) (Halobacterium pharaonis).